Consider the following 579-residue polypeptide: Thiol:disulfide interchange protein DsbD (579 aa).

An N-terminal signal peptide occupies residues 1 to 16; it reads MKKLFLFFTLIFTAFA. 2 disulfide bridges follow: Cys-124/Cys-129 and Cys-193/Cys-315. Helical transmembrane passes span 178–198, 230–250, 254–274, 296–316, 337–357, 376–396, 397–417, and 420–440; these read IFGF…LPML, LTYT…QIAL, YVMI…FGLF, GAFG…SPCT, AATL…ITLF, FGFV…PEVW, EPRL…LQMS, and GFGY…VQPL. The 131-residue stretch at 449 to 579 folds into the Thioredoxin domain; the sequence is TTTQSAVENK…AFSNWLKALH (131 aa). Cysteines 495 and 498 form a disulfide.

The protein belongs to the thioredoxin family. DsbD subfamily.

It localises to the cell inner membrane. The catalysed reaction is [protein]-dithiol + NAD(+) = [protein]-disulfide + NADH + H(+). The enzyme catalyses [protein]-dithiol + NADP(+) = [protein]-disulfide + NADPH + H(+). Functionally, required to facilitate the formation of correct disulfide bonds in some periplasmic proteins and for the assembly of the periplasmic c-type cytochromes. Acts by transferring electrons from cytoplasmic thioredoxin to the periplasm. This transfer involves a cascade of disulfide bond formation and reduction steps. This Haemophilus influenzae (strain PittEE) protein is Thiol:disulfide interchange protein DsbD.